Here is a 109-residue protein sequence, read N- to C-terminus: Hainantoxin-XVIII-2 (109 aa).

A signal peptide spans 1-18 (MKLSIIIIATSLVIAVVA). The propeptide occupies 19–46 (FPSKDSKAIENDKTEQRMEIVVQETARA). 3 cysteine pairs are disulfide-bonded: Cys47–Cys62, Cys59–Cys108, and Cys61–Cys81.

Belongs to the neurotoxin 25 family. F7 subfamily. As to expression, expressed by the venom gland.

It localises to the secreted. Putative ion channel inhibitor. This Cyriopagopus hainanus (Chinese bird spider) protein is Hainantoxin-XVIII-2.